The chain runs to 261 residues: Ribosomal RNA small subunit methyltransferase J (261 aa).

Residues 111–112, 127–128, 163–164, and Asp-181 each bind S-adenosyl-L-methionine; these read RD, ER, and SS.

It belongs to the methyltransferase superfamily. RsmJ family.

Its subcellular location is the cytoplasm. The enzyme catalyses guanosine(1516) in 16S rRNA + S-adenosyl-L-methionine = N(2)-methylguanosine(1516) in 16S rRNA + S-adenosyl-L-homocysteine + H(+). In terms of biological role, specifically methylates the guanosine in position 1516 of 16S rRNA. In Shewanella sp. (strain MR-4), this protein is Ribosomal RNA small subunit methyltransferase J.